A 539-amino-acid chain; its full sequence is uncharacterized protein (539 aa).

2 disordered regions span residues 179–203 (SDELLPDTGEDSDEDGHNHGGHSHG) and 433–459 (AQASARAQARAARRGRSAAKARGHRDE). Acidic residues predominate over residues 182 to 192 (LLPDTGEDSDE). Residues 433–442 (AQASARAQAR) show a composition bias toward low complexity. The span at 443–455 (AARRGRSAAKARG) shows a compositional bias: basic residues.

Belongs to the mycobacterial PPE family.

It is found in the secreted. This is an uncharacterized protein from Mycobacterium tuberculosis (strain CDC 1551 / Oshkosh).